An 839-amino-acid chain; its full sequence is Vacuolar protein sorting-associated protein 16 homolog (839 aa).

3'-nitrotyrosine is present on tyrosine 4. Residues 642–736 (ERIEGRVAAL…WWLKLAALAD (95 aa)) are interaction with VPS33A.

It belongs to the VPS16 family. Core component of at least two putative endosomal tethering complexes, the homotypic fusion and vacuole protein sorting (HOPS) complex and the class C core vacuole/endosome tethering (CORVET) complex. Their common core is composed of the class C Vps proteins VPS11, VPS16, VPS18 and VPS33A, which in HOPS further associates with VPS39 and VPS41 and in CORVET with VPS8 and TGFBRAP1. Interacts with RAB5C. Interacts with STX17, MON1B. Associates with adapter protein complex 3 (AP-3) and clathrin:AP-3 complexes.

It is found in the late endosome membrane. It localises to the lysosome membrane. Its subcellular location is the early endosome. The protein localises to the cytoplasmic vesicle. The protein resides in the clathrin-coated vesicle. It is found in the autophagosome. Its function is as follows. Plays a role in vesicle-mediated protein trafficking to lysosomal compartments including the endocytic membrane transport and autophagic pathways. Believed to act as a core component of the putative HOPS and CORVET endosomal tethering complexes which are proposed to be involved in the Rab5-to-Rab7 endosome conversion probably implicating MON1A/B, and via binding SNAREs and SNARE complexes to mediate tethering and docking events during SNARE-mediated membrane fusion. The HOPS complex is proposed to be recruited to Rab7 on the late endosomal membrane and to regulate late endocytic, phagocytic and autophagic traffic towards lysosomes. The CORVET complex is proposed to function as a Rab5 effector to mediate early endosome fusion probably in specific endosome subpopulations. Required for recruitment of VPS33A to the HOPS complex. Required for fusion of endosomes and autophagosomes with lysosomes; the function is dependent on its association with VPS33A but not VPS33B. The function in autophagosome-lysosome fusion implicates STX17 but not UVRAG. The protein is Vacuolar protein sorting-associated protein 16 homolog (Vps16) of Mus musculus (Mouse).